A 175-amino-acid polypeptide reads, in one-letter code: Ferritin light chain (175 aa).

The residue at position 2 (Ser-2) is an N-acetylserine. In terms of domain architecture, Ferritin-like diiron spans 7 to 156; it reads QNYSTEVEAA…DHLTNLRRLS (150 aa). Fe cation contacts are provided by Glu-54, Glu-57, Glu-58, Glu-61, and Glu-64.

The protein belongs to the ferritin family. In terms of assembly, oligomer of 24 subunits. There are two types of subunits: L (light) chain and H (heavy) chain. The major chain can be light or heavy, depending on the species and tissue type. The functional molecule forms a roughly spherical shell with a diameter of 12 nm and contains a central cavity into which the insoluble mineral iron core is deposited. Interacts with NCOA4.

It localises to the cytoplasmic vesicle. It is found in the autophagosome. Its subcellular location is the cytoplasm. The protein resides in the autolysosome. Its function is as follows. Stores iron in a soluble, non-toxic, readily available form. Important for iron homeostasis. Iron is taken up in the ferrous form and deposited as ferric hydroxides after oxidation. Also plays a role in delivery of iron to cells. Mediates iron uptake in capsule cells of the developing kidney. Delivery to lysosomes by the cargo receptor NCOA4 for autophagic degradation and release or iron. This is Ferritin light chain (FTL) from Felis catus (Cat).